Consider the following 537-residue polypeptide: Apolipoprotein N-acyltransferase (537 aa).

Helical transmembrane passes span 10–30, 37–57, 76–96, 107–127, 181–201, and 210–230; these read IALA…ITAG, LAPF…VWLI, YWFG…AFFV, FAVL…FALA, IGLW…ATLI, and AWRA…FGAI. In terms of domain architecture, CN hydrolase spans 248–501; that stretch reads MQPNLQQDAK…EGILDASLPA (254 aa). Glu-295 serves as the catalytic Proton acceptor. The active site involves Lys-360. The active-site Nucleophile is Cys-413. Residues 507–527 traverse the membrane as a helical segment; the sequence is IYARVGDVPAAVLVALAVLLA.

Belongs to the CN hydrolase family. Apolipoprotein N-acyltransferase subfamily.

The protein localises to the cell inner membrane. It carries out the reaction N-terminal S-1,2-diacyl-sn-glyceryl-L-cysteinyl-[lipoprotein] + a glycerophospholipid = N-acyl-S-1,2-diacyl-sn-glyceryl-L-cysteinyl-[lipoprotein] + a 2-acyl-sn-glycero-3-phospholipid + H(+). It participates in protein modification; lipoprotein biosynthesis (N-acyl transfer). In terms of biological role, catalyzes the phospholipid dependent N-acylation of the N-terminal cysteine of apolipoprotein, the last step in lipoprotein maturation. The protein is Apolipoprotein N-acyltransferase of Bradyrhizobium diazoefficiens (strain JCM 10833 / BCRC 13528 / IAM 13628 / NBRC 14792 / USDA 110).